The sequence spans 26 residues: Beta-hexosaminidase (26 aa).

In terms of processing, glycosylated. In terms of tissue distribution, detected in dry seeds and cotyledons.

The catalysed reaction is Hydrolysis of terminal non-reducing N-acetyl-D-hexosamine residues in N-acetyl-beta-D-hexosaminides.. Its activity is regulated as follows. Inhibited by AgNO(3) at a concentration of 0.1 mM. Strongly inhibited by CdCl(2), ZnCl(2) and FeCl(3) and moderately by CoCl(2), CuSO(4) and NiCl(2) at 10 mM concentration. CaCl(2), MgCl(2), MnSO(4) and KI also have a slight inhibitory effect of 20%-25% at 10 mM concentration. Activated to a small extent by MgCl(2) at 0.1 mM concentration but inhibited with increasing concentration. Not affected by carbohydrates such as fucose, galactose and glucose but displays a slight decrease in activity up to 25% with lactose, alpha-mannose and N-acetyl-galactosamine (GalNAc). In terms of biological role, has hexosaminidase activity. Active with both p-nitrophenyl-beta-D-N-acetylglucosamine (pNP-GlcNAc) and p-nitrophenyl-beta-D-N-acetylgalactosamine (pNP-GalNAc). Not active toward p-nitrophenyl-beta-D-N,N'-diacetylchitobiose (pNP-(GlcNAc)2) or p-nitrophenyl-beta-D-N,N',N''-triacetylchitobiose (pNP-(GlcNAc)3). Removes terminal GlcNAc and may be involved in storage protein degradation. This is Beta-hexosaminidase from Lupinus albus (White lupine).